The following is a 2014-amino-acid chain: MAGTSQRPPSMYWCVGTEGLAVCPGPAMETHNGAEDMGSKLSLPGGSSTVQCPSMEEIHTAYKQRNLSRARDLLRGVCEESESSQEKGQLLSIAAAHGDLETVQFLLTEKRVELPTEPTDDNPAVVAAHFGHAEVVRELLESLPGPCTPQRLLNWMLALACQRGHLEVVKLLVLTHGADPENYAVRKNEFPVIVRLPLYAAIKAGNEDIAIFLLRHGAYFCSYILLDSPEPSKHLLRKYFIEASALPSSYPGKIALRVKWSHLKLPWVDLDWLLDISCQITELDLSANCLPSLPSIIPWGLINLKKLNLSNNQLGELPCVQSSDEIICSRLLEIDISSNKLSHLPPGFLHLSKLQKLTASKNYLERLFEEENATNWIGLRKLQELDLADNRLTELPVQFMHSFKSLTSLNVSRNNLKSFPDPWSCPLKCCKASKNALESLPDKMAVFWKSHLRDADFSENSLKEVPLGLFQLDALMFLRLQGNQLLSLPPQEKWTCTQLKTLDLSRNQLGKNEDGLKTKRISLFTTRGRQRSGTETASMLEFPAFLSESLEVLCLNDNHLDAVPPSVCLLKNLSELYLGNNPGLRELPPELGQLGNLWQLDIEDLNISNVPAEVRKEGPKATLSFLRAQLRKAEKCKLMKMILVGPPRQGKSTLLEILQTGKAPQLAHSEATIRTTKWELQRPAGSKAKVESVEFNVWDIGGPASMATVNQCFFTDKALYVVVWNLALGEEAVANLQFWLLNIEAKAPNAVVLVVGTHLDLIEAKFRVERIATLRAYVLALCRSPSGSRATGFPDITFKHLHEISCKNLEGQEGLRQLIFHVTCNMKDVGSTIGCQKLAGRLIPRSYISLQEAVLAEQQRRSLGDQVQYLTDRQLDQLVEQTPGNDIKDYEDLQSAISFLIETGTLLHFPDTSHGLRNLYFLDPIWLSECLQRIFNIKGSRSVAKNGVIQAEDLRMLLVGTGFTQQTEEQYFQFLAKFEIALPVANDSYLLPHLLPSKPGLDTHSMRHPMANTIQRVFKMSFVPVGFWQRFIARMLISLAEMDLQLFENKKNTKSRNRKVTIYSFTGSQRNRCSTFRVRRNQTIYWQEGLLVTFDGGYLSVESSDVNWKKKKSGGIKIICQSEMRDFSAMAFITDHVNSLIDQWFPALTATESDGTPLMEQYVPCPVCEASWAQHADPNERSESVQYFDMEDCVLTAIERDFISCPRHPDLPVPLQELVPELFMTDFPARLFLENSKLEHTEGENSILGQGGSGTVIYQARYQGQPVAVKRFHIKKFKNSANAPADTMLRHLRAMDAMKNFSDFRQEASMLHALQHPCIVSLIGISIHPLCFALELAPLGSLNTVLSENAKDSSFMPLGHMLTQKIAYQIASGLAYLHKKNIIFCDLKSDNILVWSLSAKEHINIKLSDYGISRQSFHEGALGVEGTPGYQAPEIRPRIVYDEKVDMFSYGMVLYELLSGQRPALGHHQLQIVKKLSKGIRPVLGQPEEVQFHRLQALMMECWDTKPEKRPLALSVVSQMKDPTFATFMYMLPCGKQSAFFSSQSQEYTVVFWDGKEESRNYTVVNTEKGLLEVQRMTCPGMKLSCQLKVQSSVWIATEDQKIYIYSLKGMCPLSVPQQALDTPAVVTCFLAVPVIKKNSFLVLAGLADGLVAVFPVARGTPKESCSYLCSHTANRSKFCIPDEDARQNPYPVKAMEVVNSGSEVWYSNGPGLLVIDCTILDISRRLEPYAAPSMVTSLVCSSDCRGEEMVWCLDDKANCLVMYHSATYQLCARYFCGDPNPLRDTFSVQPSVLETPGSHKTTSKGPVEECIADVSIMYSEELGTQILTHQDSLTDYCSMSSYSSSPPHQDPRSPSSLPSSLTSYSSVPFSANYEDSDRLQEPSVTSDRTEHDLSPMDGETFSQHLQAVKVLAVKDLIWVPRHGGDIIVIGLEKDSGAQRGRVIAVLKARELNRHGVLVDAAVVAKDTVVCSFANENTEWCLAVWRGWGAREFDIFYQSYEELGRLEACTRKRR.

ANK repeat units follow at residues 51–81 (QCPSMEEIHTAYKQRNLSRARDLLRGVCEES), 86–116 (EKGQLLSIAAAHGDLETVQFLLTEKRVELPT), 119–148 (TDDNPAVVAAHFGHAEVVRELLESLPGPCT), 152–182 (LLNWMLALACQRGHLEVVKLLVLTHGADPEN), and 193–222 (IVRLPLYAAIKAGNEDIAIFLLRHGAYFCS). LRR repeat units follow at residues 279 to 300 (QITELDLSANCLPSLPSIIPWG), 303 to 324 (NLKKLNLSNNQLGELPCVQSSD), 330 to 351 (RLLEIDISSNKLSHLPPGFLHL), 353 to 374 (KLQKLTASKNYLERLFEEENAT), 381 to 402 (KLQELDLADNRLTELPVQFMHS), 405 to 426 (SLTSLNVSRNNLKSFPDPWSCP), 427 to 447 (LKCCKASKNALESLPDKMAVF), 451 to 472 (HLRDADFSENSLKEVPLGLFQL), 474 to 495 (ALMFLRLQGNQLLSLPPQEKWT), 498 to 519 (QLKTLDLSRNQLGKNEDGLKTK), 549 to 570 (SLEVLCLNDNHLDAVPPSVCLL), 572 to 594 (NLSELYLGNNPGLRELPPELGQL), and 596 to 617 (NLWQLDIEDLNISNVPAEVRKE). The 195-residue stretch at 632–826 (KAEKCKLMKM…QLIFHVTCNM (195 aa)) folds into the Roc domain. The GDP site is built by Pro647, Arg648, Gly650, Lys651, Ser652, Thr653, Glu670, His758, Asp760, Cys806, and Lys807. The COR domain maps to 840-1237 (GRLIPRSYIS…PARLFLENSK (398 aa)). Thr1061 is modified (phosphothreonine). Residues Ser1064 and Ser1074 each carry the phosphoserine modification. Phosphothreonine is present on Thr1075. The Protein kinase domain occupies 1242-1525 (EGENSILGQG…VVSQMKDPTF (284 aa)). ATP contacts are provided by residues 1248–1256 (LGQGGSGTV) and Lys1270. Asp1386 acts as the Proton acceptor in catalysis. WD repeat units lie at residues 1539 to 1579 (AFFS…RMTC), 1582 to 1622 (MKLS…QALD), 1623 to 1668 (TPAV…SCSY), 1693 to 1729 (VKAMEVVNSGSEVWYSNGPGLLVIDCTILDISRRLEP), 1730 to 1778 (YAAP…YFCG), 1779 to 1948 (DPNP…AVLK), and 1950 to 1986 (RELNRHGVLVDAAVVAKDTVVCSFANENTEWCLAVWR). A WD40 loop; involved in dimer stabilization region spans residues 1791–1906 (PSVLETPGSH…MDGETFSQHL (116 aa)). A disordered region spans residues 1839 to 1895 (SMSSYSSSPPHQDPRSPSSLPSSLTSYSSVPFSANYEDSDRLQEPSVTSDRTEHDLS). A compositionally biased stretch (low complexity) spans 1853–1871 (RSPSSLPSSLTSYSSVPFS).

It belongs to the protein kinase superfamily. TKL Ser/Thr protein kinase family. ROCO subfamily. As to quaternary structure, homodimer. The homodimer is autoinhibited and stabilized by its N-terminal residues and ANK repeats. Interacts with CSK. It depends on Mg(2+) as a cofactor. The cofactor is Mn(2+). Autophosphorylated. Autophosphorylation in inhibited in its dimeric state. Phosphorylated by protein kinase C isozymes PRKCA, PRKCB, PRKCG, PRKCE, PRKCZ and PRKCT at Ser-1064, Ser-1074 and Thr-1075. Phosphorylation at these residues activates the kinase activity of LRRK1 to phosphorylate RAB7A. As to expression, expressed in osteoclasts and bone marrow stromal cells.

The protein localises to the cytoplasm. Its subcellular location is the cell membrane. The catalysed reaction is L-seryl-[protein] + ATP = O-phospho-L-seryl-[protein] + ADP + H(+). It catalyses the reaction L-threonyl-[protein] + ATP = O-phospho-L-threonyl-[protein] + ADP + H(+). With respect to regulation, activated by phosphorylation by PKC. Binds both GTP and GDP; binding of GTP stimulates kinase activity. Sterically autoinhibited in its dimeric state. In terms of biological role, serine/threonine-protein kinase which phosphorylates RAB proteins involved in intracellular trafficking. Phosphorylates RAB7A; this activity is dependent on protein kinase C (PKC) activation. Plays a role in the negative regulation of bone mass, acting through the maturation of osteoclasts. The protein is Leucine-rich repeat serine/threonine-protein kinase 1 of Mus musculus (Mouse).